A 751-amino-acid polypeptide reads, in one-letter code: Catalase-peroxidase (751 aa).

Positions 1 to 21 are disordered; it reads MSNESKCPFHQTAGGGTTNRD. Residues 90–244 constitute a cross-link (tryptophyl-tyrosyl-methioninium (Trp-Tyr) (with M-270)); it reads WHSAGTYRIG…LAAVQMGLIY (155 aa). His-91 acts as the Proton acceptor in catalysis. Positions 244-270 form a cross-link, tryptophyl-tyrosyl-methioninium (Tyr-Met) (with W-90); it reads YVNPEGPEGNPDPVASGKDIRETFGRM. His-285 is a binding site for heme b. The tract at residues 365–390 is disordered; the sequence is AHQWRPKEGKGAGTVPDAHDPGKKHA.

It belongs to the peroxidase family. Peroxidase/catalase subfamily. Homodimer or homotetramer. It depends on heme b as a cofactor. Formation of the three residue Trp-Tyr-Met cross-link is important for the catalase, but not the peroxidase activity of the enzyme.

The enzyme catalyses H2O2 + AH2 = A + 2 H2O. The catalysed reaction is 2 H2O2 = O2 + 2 H2O. Bifunctional enzyme with both catalase and broad-spectrum peroxidase activity. The chain is Catalase-peroxidase from Pseudomonas putida (strain GB-1).